Reading from the N-terminus, the 153-residue chain is Aspartate carbamoyltransferase regulatory chain (153 aa).

Positions 110, 115, 138, and 141 each coordinate Zn(2+).

Belongs to the PyrI family. As to quaternary structure, contains catalytic and regulatory chains. The cofactor is Zn(2+).

Involved in allosteric regulation of aspartate carbamoyltransferase. The sequence is that of Aspartate carbamoyltransferase regulatory chain from Bacteroides thetaiotaomicron (strain ATCC 29148 / DSM 2079 / JCM 5827 / CCUG 10774 / NCTC 10582 / VPI-5482 / E50).